The sequence spans 463 residues: MKKTLVKSLYRETEKFIDKDIEISGWIRTIRDSKSFAFIELNDGSFFKNVQVVLDDKIENFKEIIKLPISSSLSVEGTLILTPNAKQSFEIKAKKISLEGNSSSEYPLQKKRHTLEYLRTIAHLRPRSNTFSAVFRVRSIAAYAVHKFFQEKDFVYVNTPIITGSDCEGAGEMFRITTMDLNNVPKEEDNSVDFSKDFFGKETNLTVSGQLSAETMALAFRNVYTFGPTFRAEDSNTSRHAAEFWMIEPEMAFAELKDYMDTAEELVKYIINYVLEKAPEEMAFFNSFIDKSLFDRLNNVVNSEFGRITYTEAVDILQKSGASFQYPVEWGIDLQTEHERYLTEKVFEKPIFVTDYPKAIKAFYMRENEDGKTVAAADLLVPGVGEIVGGSQREERLSVLEKRISEFGLNKEDYWWYLELRKYGETKHSGFGLGFERILMYITGMSNIRDVIPFPRTPGSAEF.

The protein belongs to the class-II aminoacyl-tRNA synthetase family. As to quaternary structure, homodimer.

It localises to the cytoplasm. The catalysed reaction is tRNA(Asn) + L-asparagine + ATP = L-asparaginyl-tRNA(Asn) + AMP + diphosphate + H(+). The polypeptide is Asparagine--tRNA ligase (Clostridium kluyveri (strain ATCC 8527 / DSM 555 / NBRC 12016 / NCIMB 10680 / K1)).